The primary structure comprises 362 residues: 5-amino-6-(D-ribitylamino)uracil--L-tyrosine 4-hydroxyphenyl transferase (362 aa).

The region spanning 48 to 294 is the Radical SAM core domain; it reads ITYVVNRNIN…GDTIKNIQVS (247 aa). Residues cysteine 62, cysteine 66, and cysteine 69 each coordinate [4Fe-4S] cluster.

It belongs to the radical SAM superfamily. CofH family. In terms of assembly, consists of two subunits, CofG and CofH. The cofactor is [4Fe-4S] cluster.

It carries out the reaction 5-amino-6-(D-ribitylamino)uracil + L-tyrosine + S-adenosyl-L-methionine = 5-amino-5-(4-hydroxybenzyl)-6-(D-ribitylimino)-5,6-dihydrouracil + 2-iminoacetate + 5'-deoxyadenosine + L-methionine + H(+). The protein operates within cofactor biosynthesis; coenzyme F0 biosynthesis. Its function is as follows. Catalyzes the radical-mediated synthesis of 5-amino-5-(4-hydroxybenzyl)-6-(D-ribitylimino)-5,6-dihydrouracil from 5-amino-6-(D-ribitylamino)uracil and L-tyrosine. This chain is 5-amino-6-(D-ribitylamino)uracil--L-tyrosine 4-hydroxyphenyl transferase, found in Methanococcus aeolicus (strain ATCC BAA-1280 / DSM 17508 / OCM 812 / Nankai-3).